The chain runs to 112 residues: High mobility group protein D (112 aa).

A DNA-binding region (HMG box) is located at residues 5 to 71 (PKRPLSAYML…DYDRAVKEFE (67 aa)). S10 is subject to Phosphoserine. The residue at position 12 (Y12) is a Phosphotyrosine. Residues 72–112 (ANGGSSAANGGGAKKRAKPAKKVAKKSKKEESDEDDDDESE) form a disordered region. A compositionally biased stretch (basic residues) spans 84-98 (AKKRAKPAKKVAKKS). A phosphoserine mark is found at S103 and S111. Residues 103-112 (SDEDDDDESE) show a composition bias toward acidic residues.

It belongs to the HMGB family.

It is found in the nucleus. The protein resides in the chromosome. Functionally, binds preferentially single-stranded DNA and unwinds double-stranded DNA. Prefers sites containing the sequence 5'-ttg-3'. Facilitates DNA bending. Associated with early embryonic chromatin in the absence of histone H1. In Drosophila melanogaster (Fruit fly), this protein is High mobility group protein D (HmgD).